The primary structure comprises 369 residues: Phospho-N-acetylmuramoyl-pentapeptide-transferase (369 aa).

Transmembrane regions (helical) follow at residues 2-22, 54-74, 80-100, 113-133, 158-178, 195-215, 241-261, 268-288, 293-313, and 347-367; these read IAIL…TPFF, GLVI…FLGL, GLLV…DDIL, FYKV…TFLV, ALFS…LLWI, LDGL…VIGF, PLDM…FLWW, IMMG…LSIL, LLFL…ILQI, and FWII…ADWL.

Belongs to the glycosyltransferase 4 family. MraY subfamily. The cofactor is Mg(2+).

The protein resides in the cell membrane. It carries out the reaction UDP-N-acetyl-alpha-D-muramoyl-L-alanyl-gamma-D-glutamyl-meso-2,6-diaminopimeloyl-D-alanyl-D-alanine + di-trans,octa-cis-undecaprenyl phosphate = di-trans,octa-cis-undecaprenyl diphospho-N-acetyl-alpha-D-muramoyl-L-alanyl-D-glutamyl-meso-2,6-diaminopimeloyl-D-alanyl-D-alanine + UMP. Its pathway is cell wall biogenesis; peptidoglycan biosynthesis. In terms of biological role, catalyzes the initial step of the lipid cycle reactions in the biosynthesis of the cell wall peptidoglycan: transfers peptidoglycan precursor phospho-MurNAc-pentapeptide from UDP-MurNAc-pentapeptide onto the lipid carrier undecaprenyl phosphate, yielding undecaprenyl-pyrophosphoryl-MurNAc-pentapeptide, known as lipid I. In Tropheryma whipplei (strain Twist) (Whipple's bacillus), this protein is Phospho-N-acetylmuramoyl-pentapeptide-transferase.